A 463-amino-acid chain; its full sequence is Glutamate--tRNA ligase 1 (463 aa).

Residues 10–20 (PSPTGYLHIGG) carry the 'HIGH' region motif. The 'KMSKS' region motif lies at 238–242 (KLSKR). K241 is a binding site for ATP.

This sequence belongs to the class-I aminoacyl-tRNA synthetase family. Glutamate--tRNA ligase type 1 subfamily. Monomer.

Its subcellular location is the cytoplasm. It catalyses the reaction tRNA(Glu) + L-glutamate + ATP = L-glutamyl-tRNA(Glu) + AMP + diphosphate. Catalyzes the attachment of glutamate to tRNA(Glu) in a two-step reaction: glutamate is first activated by ATP to form Glu-AMP and then transferred to the acceptor end of tRNA(Glu). In Helicobacter pylori (strain P12), this protein is Glutamate--tRNA ligase 1.